The sequence spans 211 residues: Suppressor of RNA silencing p3 (211 aa).

This sequence belongs to the tenuiviruses p3 protein family. In terms of assembly, homodimer.

The protein localises to the host cytoplasm. In terms of biological role, acts as a suppressor of RNA-mediated gene silencing, also known as post-transcriptional gene silencing (PTGS), presumably through the binding of dsRNA. This is Suppressor of RNA silencing p3 from Avena sativa (Oat).